A 477-amino-acid polypeptide reads, in one-letter code: Peroxisome proliferator-activated receptor gamma (477 aa).

A Phosphoserine; by MAPK modification is found at serine 87. The segment at residues 110 to 184 (AIECRVCGDK…VGMSHNAIRF (75 aa)) is a DNA-binding region (nuclear receptor). 2 NR C4-type zinc fingers span residues 113–133 (CRVC…CEGC) and 150–172 (CDLN…FQKC). Positions 231–281 (TKAKAPGHPDGQSHRQNSRGYTRHELADDGGGSDQGAVREPRAEQGGGDSN) are disordered. One can recognise an NR LBD domain in the interval 252 to 475 (TRHELADDGG…HPLLQEIYKD (224 aa)). Residues 467–475 (PLLQEIYKD) carry the 9aaTAD motif.

Belongs to the nuclear hormone receptor family. NR1 subfamily. Heterodimer with the retinoid X receptor. Expressed mainly in adipose tissue and kidney.

The protein resides in the nucleus. It localises to the cytoplasm. In terms of biological role, receptor that binds peroxisome proliferators such as hypolipidemic drugs and fatty acids. Once activated by a ligand, the receptor binds to a promoter element in the gene for acyl-CoA oxidase and activates its transcription. It therefore controls the peroxisomal beta-oxidation pathway of fatty acids. Key regulator of adipocyte differentiation and glucose homeostasis. May play a role in the regulation of circadian rhythm. The sequence is that of Peroxisome proliferator-activated receptor gamma (pparg) from Xenopus laevis (African clawed frog).